A 656-amino-acid chain; its full sequence is DNA ligase (656 aa).

Residues 32-36 (DAVYD) and 81-82 (SL) each bind NAD(+). Lys112 serves as the catalytic N6-AMP-lysine intermediate. NAD(+)-binding residues include Arg133, Glu167, and Lys306. Residues Cys400, Cys403, Cys416, and Cys421 each coordinate Zn(2+). The BRCT domain occupies 577 to 656 (KSSSVFNNKT…ELLKRLKELD (80 aa)).

The protein belongs to the NAD-dependent DNA ligase family. LigA subfamily. Requires Mg(2+) as cofactor. The cofactor is Mn(2+).

It catalyses the reaction NAD(+) + (deoxyribonucleotide)n-3'-hydroxyl + 5'-phospho-(deoxyribonucleotide)m = (deoxyribonucleotide)n+m + AMP + beta-nicotinamide D-nucleotide.. DNA ligase that catalyzes the formation of phosphodiester linkages between 5'-phosphoryl and 3'-hydroxyl groups in double-stranded DNA using NAD as a coenzyme and as the energy source for the reaction. It is essential for DNA replication and repair of damaged DNA. In Helicobacter pylori (strain P12), this protein is DNA ligase.